The chain runs to 657 residues: Histidine ammonia-lyase (657 aa).

Positions 253–255 (ASG) form a cross-link, 5-imidazolinone (Ala-Gly). The residue at position 254 (Ser254) is a 2,3-didehydroalanine (Ser). Phosphothreonine is present on Thr396. Position 635 is a phosphoserine (Ser635). Thr637 carries the phosphothreonine modification. At Ser648 the chain carries Phosphoserine.

The protein belongs to the PAL/histidase family. In terms of processing, contains an active site 4-methylidene-imidazol-5-one (MIO), which is formed autocatalytically by cyclization and dehydration of residues Ala-Ser-Gly.

It catalyses the reaction L-histidine = trans-urocanate + NH4(+). It participates in amino-acid degradation; L-histidine degradation into L-glutamate; N-formimidoyl-L-glutamate from L-histidine: step 1/3. The chain is Histidine ammonia-lyase (Hal) from Mus musculus (Mouse).